The following is a 351-amino-acid chain: Phosphoribosylformylglycinamidine cyclo-ligase (351 aa).

The protein belongs to the AIR synthase family.

The protein resides in the cytoplasm. The enzyme catalyses 2-formamido-N(1)-(5-O-phospho-beta-D-ribosyl)acetamidine + ATP = 5-amino-1-(5-phospho-beta-D-ribosyl)imidazole + ADP + phosphate + H(+). The protein operates within purine metabolism; IMP biosynthesis via de novo pathway; 5-amino-1-(5-phospho-D-ribosyl)imidazole from N(2)-formyl-N(1)-(5-phospho-D-ribosyl)glycinamide: step 2/2. The polypeptide is Phosphoribosylformylglycinamidine cyclo-ligase (Azotobacter vinelandii (strain DJ / ATCC BAA-1303)).